The primary structure comprises 212 residues: Uracil phosphoribosyltransferase (212 aa).

Residues arginine 78, arginine 103, and 130–138 contribute to the 5-phospho-alpha-D-ribose 1-diphosphate site; that span reads DPMLATGSS. Residues isoleucine 193 and 198–200 each bind uracil; that span reads GDA. Aspartate 199 provides a ligand contact to 5-phospho-alpha-D-ribose 1-diphosphate.

This sequence belongs to the UPRTase family. Mg(2+) is required as a cofactor.

The enzyme catalyses UMP + diphosphate = 5-phospho-alpha-D-ribose 1-diphosphate + uracil. Its pathway is pyrimidine metabolism; UMP biosynthesis via salvage pathway; UMP from uracil: step 1/1. With respect to regulation, allosterically activated by GTP. In terms of biological role, catalyzes the conversion of uracil and 5-phospho-alpha-D-ribose 1-diphosphate (PRPP) to UMP and diphosphate. The chain is Uracil phosphoribosyltransferase from Pseudomonas fluorescens (strain ATCC BAA-477 / NRRL B-23932 / Pf-5).